The following is a 113-amino-acid chain: Large ribosomal subunit protein uL22 (113 aa).

This sequence belongs to the universal ribosomal protein uL22 family. Part of the 50S ribosomal subunit.

In terms of biological role, this protein binds specifically to 23S rRNA; its binding is stimulated by other ribosomal proteins, e.g. L4, L17, and L20. It is important during the early stages of 50S assembly. It makes multiple contacts with different domains of the 23S rRNA in the assembled 50S subunit and ribosome. The globular domain of the protein is located near the polypeptide exit tunnel on the outside of the subunit, while an extended beta-hairpin is found that lines the wall of the exit tunnel in the center of the 70S ribosome. This is Large ribosomal subunit protein uL22 from Neorickettsia sennetsu (strain ATCC VR-367 / Miyayama) (Ehrlichia sennetsu).